Consider the following 121-residue polypeptide: MNHAPHLYFAWQQLVDKSQLMLRLATEEQWDELIASEMAYVNAVQEIAHLTEEVAPSTTMQEQLRPMLRLILDNESKVKQLLQIRMDELAKLVGQSSVQKSVLSAYGDQGGFVLAPQDNLF.

A required for homodimerization region spans residues 1–50 (MNHAPHLYFAWQQLVDKSQLMLRLATEEQWDELIASEMAYVNAVQEIAHL). Residues 60–98 (MQEQLRPMLRLILDNESKVKQLLQIRMDELAKLVGQSSV) form a fliD binding region.

This sequence belongs to the FliT family. Homodimer. Interacts with FliD and FlhC.

It localises to the cytoplasm. The protein localises to the cytosol. In terms of biological role, dual-function protein that regulates the transcription of class 2 flagellar operons and that also acts as an export chaperone for the filament-capping protein FliD. As a transcriptional regulator, acts as an anti-FlhDC factor; it directly binds FlhC, thus inhibiting the binding of the FlhC/FlhD complex to class 2 promoters, resulting in decreased expression of class 2 flagellar operons. As a chaperone, effects FliD transition to the membrane by preventing its premature polymerization, and by directing it to the export apparatus. The sequence is that of Flagellar protein FliT from Shigella sonnei (strain Ss046).